The following is an 858-amino-acid chain: Myosin-K heavy chain (858 aa).

Residues 7 to 820 form the Myosin motor domain; it reads SGVDDLVLVS…TIFVMEDLLM (814 aa). Position 100–107 (100–107) interacts with ATP; the sequence is GESGAGKT. The segment at 121 to 265 is disordered; it reads SPNNSSGGGI…GGGYGGSSKT (145 aa). Gly residues-rich tracts occupy residues 126 to 139 and 157 to 182; these read SGGG…GNGG and RGMG…SRGG. Residues 183–228 show a composition bias toward pro residues; it reads GPPPTRGRGGPPPPIPQNRGAPPPVSNGGAPPPVARGPVAPPPTRG. Residues 233-245 show a composition bias toward gly residues; that stretch reads RGGGPANRGGRGG. Positions 712–722 are actin-binding; the sequence is PHYIRCIKPND. A tail region spans residues 821 to 858; the sequence is QKIDPIGYKNRVQAYKENEKLAQMKQGKHSMKQKCLIQ.

This sequence belongs to the TRAFAC class myosin-kinesin ATPase superfamily. Myosin family.

Its subcellular location is the cytoplasm. Its function is as follows. Myosins are actin-based motor molecules with ATPase activity. Involved in phagocytosis and motility, and in the maintenance and dynamics of cell cortex. The chain is Myosin-K heavy chain (myoK) from Dictyostelium discoideum (Social amoeba).